The primary structure comprises 118 residues: uncharacterized protein (118 aa).

Residues 41 to 61 traverse the membrane as a helical segment; sequence IFLLIIITIIFALTMYTSVQV.

It localises to the host membrane. This is an uncharacterized protein from Ostreid herpesvirus 1 (isolate France) (OsHV-1).